Here is a 296-residue protein sequence, read N- to C-terminus: Protoheme IX farnesyltransferase (296 aa).

Residues 1 to 9 (MMFKQYLQV) lie on the Cytoplasmic side of the membrane. The chain crosses the membrane as a helical span at residues 10–28 (TKPGIIFGNLISVIGGFLL). At 29 to 37 (ASKGSIDYP) the chain is on the periplasmic side. A helical membrane pass occupies residues 38–56 (LFIYTLVGVSLVVASGCVF). At 57-78 (NNYIDRDIDRKMERTKNRVLVK) the chain is on the cytoplasmic side. Residues 79 to 97 (GLISPGVSLVYATLLGIAG) form a helical membrane-spanning segment. Topologically, residues 98 to 107 (FMLLWFGANP) are periplasmic. The chain crosses the membrane as a helical span at residues 108–126 (LACWLGVMGFVVYVGVYSL). Residues 127–197 (YMKRHSVYGT…YQAANIPVLP (71 aa)) lie on the Cytoplasmic side of the membrane. The chain crosses the membrane as a helical span at residues 198–216 (VIKGISVAKNHITLYIIAF). At 217–228 (AVATLMLTLGGY) the chain is on the periplasmic side. The helical transmembrane segment at 229–247 (AGYKYLVVAAAVSVWWLGM) threads the bilayer. Over 248–268 (ALRGYKVEDDKVWARKLFGFS) the chain is Cytoplasmic. The chain crosses the membrane as a helical span at residues 269–287 (IIAITALSIMMSVDFMVPN). Residues 288–296 (SQNLLTYVW) are Periplasmic-facing.

This sequence belongs to the UbiA prenyltransferase family. Protoheme IX farnesyltransferase subfamily.

The protein localises to the cell inner membrane. It catalyses the reaction heme b + (2E,6E)-farnesyl diphosphate + H2O = Fe(II)-heme o + diphosphate. It functions in the pathway porphyrin-containing compound metabolism; heme O biosynthesis; heme O from protoheme: step 1/1. In terms of biological role, converts heme B (protoheme IX) to heme O by substitution of the vinyl group on carbon 2 of heme B porphyrin ring with a hydroxyethyl farnesyl side group. This is Protoheme IX farnesyltransferase from Salmonella typhi.